A 270-amino-acid chain; its full sequence is Insulin-like growth factor-binding protein-like 1 (270 aa).

Residues 1-17 (MPRLPLLLLLLPSLARG) form the signal peptide. An IGFBP N-terminal domain is found at 26–101 (RHPECSPCQQ…PEGTGLCVCA (76 aa)). 7 disulfide bridges follow: Cys30/Cys55, Cys33/Cys57, Cys38/Cys58, Cys44/Cys61, Cys69/Cys83, Cys77/Cys98, and Cys107/Cys143. Residues 87 to 145 (ASGTAPEGTGLCVCAQRGAVCGSDGRSYSSICALRLRARHAPRAHHGHLHKARDGPCEF) enclose the Kazal-like domain. The 105-residue stretch at 147-251 (PVVLMPPRDI…GEAQSHGTVT (105 aa)) folds into the Ig-like C2-type domain. Asn158 is a glycosylation site (N-linked (GlcNAc...) asparagine). A disulfide bridge connects residues Cys168 and Cys235.

The protein localises to the secreted. IGF-binding proteins prolong the half-life of IGFs and have been shown to either inhibit or stimulate the growth promoting effects of the IGFs in cell culture. They alter the interaction of IGFs with their cell surface receptors. This Mus musculus (Mouse) protein is Insulin-like growth factor-binding protein-like 1 (Igfbpl1).